The primary structure comprises 248 residues: Endonuclease V (248 aa).

D54 and D118 together coordinate Mg(2+).

The protein belongs to the endonuclease V family. Requires Mg(2+) as cofactor.

The protein localises to the cytoplasm. It catalyses the reaction Endonucleolytic cleavage at apurinic or apyrimidinic sites to products with a 5'-phosphate.. Its function is as follows. DNA repair enzyme involved in the repair of deaminated bases. Selectively cleaves double-stranded DNA at the second phosphodiester bond 3' to a deoxyinosine leaving behind the intact lesion on the nicked DNA. This Natronomonas pharaonis (strain ATCC 35678 / DSM 2160 / CIP 103997 / JCM 8858 / NBRC 14720 / NCIMB 2260 / Gabara) (Halobacterium pharaonis) protein is Endonuclease V.